The primary structure comprises 452 residues: 23S rRNA (uracil(1939)-C(5))-methyltransferase RlmD (452 aa).

In terms of domain architecture, TRAM spans 1 to 57; sequence METEVNVAEISALDYEGRGVTKVGGKTVFIKGALPSERVGFRIVRQKKQFDEAEAVA. Cys-70, Cys-76, Cys-79, and Cys-157 together coordinate [4Fe-4S] cluster. Gln-269, Phe-298, Asn-303, Glu-319, Asn-347, and Asp-368 together coordinate S-adenosyl-L-methionine. Cys-395 (nucleophile) is an active-site residue.

Belongs to the class I-like SAM-binding methyltransferase superfamily. RNA M5U methyltransferase family. RlmD subfamily.

It carries out the reaction uridine(1939) in 23S rRNA + S-adenosyl-L-methionine = 5-methyluridine(1939) in 23S rRNA + S-adenosyl-L-homocysteine + H(+). Functionally, catalyzes the formation of 5-methyl-uridine at position 1939 (m5U1939) in 23S rRNA. In Neisseria lactamica (strain 020-06), this protein is 23S rRNA (uracil(1939)-C(5))-methyltransferase RlmD.